The following is a 338-amino-acid chain: D-erythrose-4-phosphate dehydrogenase (338 aa).

Position 11–12 (Arg-11–Ile-12) interacts with NAD(+). Substrate-binding positions include Ser-153–Thr-155, Arg-199, Thr-212–Lys-213, and Arg-235. The Nucleophile role is filled by Cys-154. Asn-317 provides a ligand contact to NAD(+).

This sequence belongs to the glyceraldehyde-3-phosphate dehydrogenase family. Epd subfamily. In terms of assembly, homotetramer.

It localises to the cytoplasm. The enzyme catalyses D-erythrose 4-phosphate + NAD(+) + H2O = 4-phospho-D-erythronate + NADH + 2 H(+). It participates in cofactor biosynthesis; pyridoxine 5'-phosphate biosynthesis; pyridoxine 5'-phosphate from D-erythrose 4-phosphate: step 1/5. Functionally, catalyzes the NAD-dependent conversion of D-erythrose 4-phosphate to 4-phosphoerythronate. This Shewanella baltica (strain OS223) protein is D-erythrose-4-phosphate dehydrogenase.